The sequence spans 198 residues: Guanylate kinase (198 aa).

The 183-residue stretch at 4 to 186 (PRPVVLSGPS…AYATLKQALS (183 aa)) folds into the Guanylate kinase-like domain. 14–19 (GAGKST) contacts ATP. Residue 37-51 (SHTTRNPRPGEEDGK) coordinates substrate. Catalysis depends on residues arginine 44, arginine 137, and arginine 148. 171 to 172 (ND) contacts ATP.

This sequence belongs to the guanylate kinase family. As to quaternary structure, monomer. Interacts with RD3. As to expression, widely expressed. In retina is expressed in inner segment, outer nuclear layer, outer plexiform layer, inner plexiform layer, and ganglion cell layer (at protein level).

Its subcellular location is the photoreceptor inner segment. The protein resides in the cytoplasm. The protein localises to the cytosol. It is found in the mitochondrion. The enzyme catalyses GMP + ATP = GDP + ADP. Functionally, catalyzes the phosphorylation of GMP to GDP. Essential enzyme for recycling GMP and indirectly, cyclic GMP (cGMP). Involved in the cGMP metabolism in photoreceptors. This chain is Guanylate kinase, found in Mus musculus (Mouse).